A 461-amino-acid chain; its full sequence is Transforming growth factor beta-1-induced transcript 1 protein (461 aa).

Position 1 is an N-acetylmethionine (Met1). The disordered stretch occupies residues 1–87 (MEDLDALLSD…PFSSSSGVLG (87 aa)). A transcription activation region spans residues 1-200 (MEDLDALLSD…GSPSPPEPTG (200 aa)). The tract at residues 1 to 240 (MEDLDALLSD…CNKPIAGQVV (240 aa)) is interaction with PTK2B/PYK2. An LD motif 1 motif is present at residues 3–15 (DLDALLSDLETTT). The residue at position 33 (Thr33) is a Phosphothreonine. Phosphotyrosine is present on Tyr38. The span at 40 to 52 (HQPQTGSGESSGA) shows a compositional bias: polar residues. Residue Tyr60 is modified to Phosphotyrosine; by FAK2 and FYN. Ser68 bears the Phosphoserine mark. An interaction with PTK2/FAK1 region spans residues 83-136 (SGVLGTGLCELDRLLQELNATQFNITDEIMSQFPSSKVASGEQKEDQSEDKKRP). Residues 92–104 (ELDRLLQELNATQ) carry the LD motif 2 motif. A disordered region spans residues 116–152 (PSSKVASGEQKEDQSEDKKRPSLPSSPSPGLPKASAT). The segment covering 124–135 (EQKEDQSEDKKR) has biased composition (basic and acidic residues). A phosphoserine mark is found at Ser137, Ser140, Ser141, Ser143, Ser164, and Ser186. An LD motif 3 motif is present at residues 157-168 (ELDRLMASLSDF). The interval 172-205 (NHLPASGPTQPPVVSSTNEGSPSPPEPTGKGSLD) is disordered. The segment covering 183–192 (PVVSSTNEGS) has biased composition (polar residues). Residue Thr188 is modified to Phosphothreonine. Phosphoserine occurs at positions 192 and 194. An LD motif 4 motif is present at residues 203-215 (SLDTMLGLLQSDL). LIM zinc-binding domains are found at residues 226–285 (GLCG…RFSP), 286–343 (RCGF…QLFA), 344–403 (PRCQ…RRGS), and 404–461 (LCAT…KLFG). Ser403 is subject to Phosphoserine. Residue Thr407 is modified to Phosphothreonine.

Belongs to the paxillin family. In terms of assembly, homooligomer. Interacts with PPARG. Interacts with TRAF4. Interacts with CRIP2. Interacts with HSPB1. Interacts with ILK. Interacts with LIMS1 and LIMS2. Interacts with NCK2. Interacts with NUDT16L1. Interacts with PAK. Interacts with PTPN12. Interacts with TCF3. Interacts with TCF7L2. Interacts with VCL. Interacts (via LD motif 3) with GIT1. Also interacts with GIT2. Forms a complex with ARHGEF7. Interacts with AR/androgen receptor in a ligand-dependent manner. Interacts with CSK. Interacts with PTK2/FAK1 and PTK2B/PYK2. Interacts with SLC6A3 and SLC6A4. Interacts with NR3C1. Interacts with SMAD3. Interacts with MAPK15. Interacts with SRC. Interacts with LYN. Interacts with talin. Interacts (via LIM zinc-binding domain 2) with CBLC (via RING-type zinc finger); the interaction is direct and enhances CBLC E3 ubiquitin-protein ligase activity. Interacts with PARVA. Interacts with PXN. Post-translationally, phosphorylated by gonadotropin-releasing hormone-activated SRC. As to expression, expressed in platelets, smooth muscle and prostate stromal cells (at protein level).

The protein localises to the cell junction. It localises to the focal adhesion. Its subcellular location is the nucleus matrix. It is found in the cytoplasm. The protein resides in the cytoskeleton. In terms of biological role, functions as a molecular adapter coordinating multiple protein-protein interactions at the focal adhesion complex and in the nucleus. Links various intracellular signaling modules to plasma membrane receptors and regulates the Wnt and TGFB signaling pathways. May also regulate SLC6A3 and SLC6A4 targeting to the plasma membrane hence regulating their activity. In the nucleus, functions as a nuclear receptor coactivator regulating glucocorticoid, androgen, mineralocorticoid and progesterone receptor transcriptional activity. May play a role in the processes of cell growth, proliferation, migration, differentiation and senescence. May have a zinc-dependent DNA-binding activity. In Homo sapiens (Human), this protein is Transforming growth factor beta-1-induced transcript 1 protein (TGFB1I1).